The sequence spans 309 residues: High-affinity zinc uptake system protein AztC (309 aa).

A signal peptide spans 1–24 (MKDWLFRIATCSIMTFSSLAAAQA). Residue histidine 61 participates in Zn(2+) binding. The interval 117–132 (GGGHYHYIDGKAVFHA) is D-loop. Residue histidine 138 coordinates Zn(2+). Residues cysteine 158 and cysteine 165 are joined by a disulfide bond. A Zn(2+)-binding site is contributed by histidine 204. The tract at residues 222-229 (QGVSTESE) is Z-loop. Aspartate 279 lines the Zn(2+) pocket.

Belongs to the bacterial solute-binding protein 9 family. As to quaternary structure, monomer.

Its subcellular location is the periplasm. Functionally, part of the ATP-binding cassette (ABC) transport system AztABCD involved in zinc import. Binds zinc with high affinity and specificity and delivers it to the membrane permease for translocation into the cytoplasm. In Paracoccus denitrificans (strain Pd 1222), this protein is High-affinity zinc uptake system protein AztC.